A 240-amino-acid chain; its full sequence is Uridylate kinase (240 aa).

12–15 is a binding site for ATP; it reads KLSG. Positions 20 to 25 are involved in allosteric activation by GTP; the sequence is GDKGFG. Glycine 54 is a binding site for UMP. The ATP site is built by glycine 55 and arginine 59. UMP-binding positions include aspartate 74 and 135 to 142; that span reads TGSPYFST. Positions 163, 169, and 172 each coordinate ATP.

This sequence belongs to the UMP kinase family. As to quaternary structure, homohexamer.

The protein resides in the cytoplasm. The catalysed reaction is UMP + ATP = UDP + ADP. It participates in pyrimidine metabolism; CTP biosynthesis via de novo pathway; UDP from UMP (UMPK route): step 1/1. Its activity is regulated as follows. Allosterically activated by GTP. Inhibited by UTP. Its function is as follows. Catalyzes the reversible phosphorylation of UMP to UDP. This Limosilactobacillus reuteri (strain DSM 20016) (Lactobacillus reuteri) protein is Uridylate kinase.